Reading from the N-terminus, the 374-residue chain is Chaperone protein DnaJ (374 aa).

The J domain maps to 5 to 70 (DYYEVLGVER…SKRAAFDQYG (66 aa)). Residues 133–211 (GTTVSIRVPT…CHGEGRVEEY (79 aa)) form a CR-type zinc finger. 8 residues coordinate Zn(2+): cysteine 146, cysteine 149, cysteine 163, cysteine 166, cysteine 185, cysteine 188, cysteine 199, and cysteine 202. 4 CXXCXGXG motif repeats span residues 146–153 (CQPCDGSG), 163–170 (CPTCGGIG), 185–192 (CPRCHGQG), and 199–206 (CTSCHGEG).

It belongs to the DnaJ family. In terms of assembly, homodimer. Zn(2+) serves as cofactor.

The protein localises to the cytoplasm. In terms of biological role, participates actively in the response to hyperosmotic and heat shock by preventing the aggregation of stress-denatured proteins and by disaggregating proteins, also in an autonomous, DnaK-independent fashion. Unfolded proteins bind initially to DnaJ; upon interaction with the DnaJ-bound protein, DnaK hydrolyzes its bound ATP, resulting in the formation of a stable complex. GrpE releases ADP from DnaK; ATP binding to DnaK triggers the release of the substrate protein, thus completing the reaction cycle. Several rounds of ATP-dependent interactions between DnaJ, DnaK and GrpE are required for fully efficient folding. Also involved, together with DnaK and GrpE, in the DNA replication of plasmids through activation of initiation proteins. This Pseudomonas putida (strain GB-1) protein is Chaperone protein DnaJ.